Reading from the N-terminus, the 504-residue chain is DnaJ homolog subfamily C member 3 (504 aa).

Positions 1–31 (MVAPGSVTSRLGSVFPFLLVLVDLQYEGAEC) are cleaved as a signal peptide. TPR repeat units follow at residues 37–70 (VEKHLELGKKLLAAGQLADALSQFHAAVDGDPDN), 72–104 (IAYYRRATVFLAMGKSKAALPDLTKVIQLKMDF), 105–138 (TAARLQRGHLLLKQGKLDEAEDDFKKVLKSNPSE), 154–187 (MQRLRSQALNAFGSGDYTAAIAFLDKILEVCVWD), 189–221 (ELRELRAECFIKEGEPRKAISDLKAASKLKNDN), 222–255 (TEAFYKISTLYYQLGDHELSLSEVRECLKLDQDH), 268–301 (LNKLIESAEELIRDGRYTDATSKYESVMKTEPSI), 306–339 (VRSKERICHCFSKDEKPVEAIRVCSEVLQMEPDN), and 340–373 (VNALKDRAEAYLIEEMYDEAIQDYETAQEHNEND). A disulfide bond links Cys248 and Cys258. Ser274 is modified (phosphoserine; by FAM20C). Cys313 and Cys329 are disulfide-bonded. The segment at 375-393 (QIREGLEKAQRLLKQSQKR) is flexible linker. The region spanning 394–462 (DYYKILGVKR…EMRKKFDDGE (69 aa)) is the J domain. The disordered stretch occupies residues 451 to 481 (DPEMRKKFDDGEDPLDAESQQGGGGNPFHRS).

As to quaternary structure, interacts with EIF2AK4/GCN2; this interaction occurs under endoplasmic reticulum (ER) stress, hypothermic and amino acid starving stress conditions and inhibits EIF2AK4/GCN2 kinase activity. Interacts with EIF2AK3. Interacts with EIF2AK2. Forms a trimeric complex with DNAJB1 and HSPA8. Interacts with THAP12. In terms of tissue distribution, widely expressed with high level in the pancreas and testis. Also expressed in cell lines with different levels.

The protein localises to the endoplasmic reticulum. Involved in the unfolded protein response (UPR) during endoplasmic reticulum (ER) stress. Acts as a negative regulator of the EIF2AK4/GCN2 kinase activity by preventing the phosphorylation of eIF-2-alpha at 'Ser-52' and hence attenuating general protein synthesis under ER stress, hypothermic and amino acid starving stress conditions. Co-chaperone of HSPA8/HSC70, it stimulates its ATPase activity. May inhibit both the autophosphorylation of EIF2AK2/PKR and the ability of EIF2AK2 to catalyze phosphorylation of the EIF2A. May inhibit EIF2AK3/PERK activity. This chain is DnaJ homolog subfamily C member 3 (DNAJC3), found in Homo sapiens (Human).